The chain runs to 149 residues: Large ribosomal subunit protein bL9 (149 aa).

This sequence belongs to the bacterial ribosomal protein bL9 family.

Functionally, binds to the 23S rRNA. This chain is Large ribosomal subunit protein bL9, found in Vibrio vulnificus (strain CMCP6).